A 247-amino-acid polypeptide reads, in one-letter code: Putative urease accessory protein UreD homolog (247 aa).

The protein belongs to the UreD family. As to quaternary structure, ureD, UreF and UreG form a complex that acts as a GTP-hydrolysis-dependent molecular chaperone, activating the urease apoprotein by helping to assemble the nickel containing metallocenter of UreC. The UreE protein probably delivers the nickel.

It localises to the cytoplasm. Required for maturation of urease via the functional incorporation of the urease nickel metallocenter. The chain is Putative urease accessory protein UreD homolog from Escherichia coli O157:H7.